The primary structure comprises 347 residues: GTP 3',8-cyclase (347 aa).

A Radical SAM core domain is found at 10 to 242 (RLNRPIGVLR…ERINARWPLE (233 aa)). Arginine 19 is a binding site for GTP. [4Fe-4S] cluster contacts are provided by cysteine 26 and cysteine 30. Tyrosine 32 contacts S-adenosyl-L-methionine. Cysteine 33 is a binding site for [4Fe-4S] cluster. Residue arginine 65 coordinates GTP. Glycine 69 lines the S-adenosyl-L-methionine pocket. Threonine 104 contacts GTP. Residue serine 129 participates in S-adenosyl-L-methionine binding. Lysine 178 contributes to the GTP binding site. Methionine 212 is an S-adenosyl-L-methionine binding site. Positions 275 and 278 each coordinate [4Fe-4S] cluster. Position 280–282 (280–282 (RLR)) interacts with GTP. Cysteine 292 is a binding site for [4Fe-4S] cluster.

Belongs to the radical SAM superfamily. MoaA family. Monomer and homodimer. [4Fe-4S] cluster is required as a cofactor.

It carries out the reaction GTP + AH2 + S-adenosyl-L-methionine = (8S)-3',8-cyclo-7,8-dihydroguanosine 5'-triphosphate + 5'-deoxyadenosine + L-methionine + A + H(+). It participates in cofactor biosynthesis; molybdopterin biosynthesis. In terms of biological role, catalyzes the cyclization of GTP to (8S)-3',8-cyclo-7,8-dihydroguanosine 5'-triphosphate. This Synechococcus sp. (strain CC9605) protein is GTP 3',8-cyclase.